Here is a 925-residue protein sequence, read N- to C-terminus: Probable glycoprotein hormone G-protein coupled receptor (925 aa).

An N-terminal signal peptide occupies residues 1 to 27 (MEDRGICPRVLQVLFLVVLILISPVYA). Residues 28 to 529 (AKNDACTKCS…EDIMGYVWLT (502 aa)) lie on the Extracellular side of the membrane. An N-linked (GlcNAc...) asparagine glycan is attached at Asn-61. 8 LRR repeats span residues 85–106 (KLKY…RVKN), 110–131 (SLIT…AFDD), 134–155 (QLTQ…NKTS), 156–180 (SVTK…GNLP), 181–202 (SLEN…IFRQ), 203–224 (NTRL…NEDA), 230–250 (SLKT…RGLK), and 251–273 (NLHF…DSIR). Asn-152 carries an N-linked (GlcNAc...) asparagine glycan. An N-linked (GlcNAc...) asparagine glycan is attached at Asn-212. The tract at residues 299 to 493 (TMQKPSTEEN…PTLIPHSNHT (195 aa)) is disordered. The segment covering 301-318 (QKPSTEENNGQTTASSPT) has biased composition (polar residues). A 1; truncated repeat occupies 333–349 (STQPHTTSGFGGGGFPG). Positions 333 to 461 (STQPHTTSGF…PGGGGFPGGG (129 aa)) are 5 X approximate tandem repeats. Residues 341–362 (GFGGGGFPGGGGGFPGGGGFPA) are compositionally biased toward gly residues. 3 tandem repeats follow at residues 350–384 (GGGG…GFPG), 385–419 (GGGG…GFPG), and 420–453 (GGGG…GFPG). Residues 365–375 (SKTSTQPHTTS) are compositionally biased toward polar residues. Gly residues predominate over residues 376–397 (GFGGGGFPGGGGGFPGGGGFPA). The segment covering 400 to 410 (SKTSTQPHTTS) has biased composition (polar residues). A compositionally biased stretch (gly residues) spans 411-432 (GFGGGGFPGGGGGFPGGGGFPG). Over residues 434–445 (SNTSTQPHTTSN) the composition is skewed to polar residues. Residue Asn-435 is glycosylated (N-linked (GlcNAc...) asparagine). Residues 446 to 462 (SGGGGFPGGGGFPGGGT) are compositionally biased toward gly residues. The stretch at 454–461 (GGGFPGGG) is one 5; truncated repeat. The segment covering 476–493 (VHQSTADPPTLIPHSNHT) has biased composition (polar residues). N-linked (GlcNAc...) asparagine glycosylation is present at Asn-495. Residues 530 to 551 (VVSFMVGAVALVANLVVALVLL) traverse the membrane as a helical segment. Residues 552–561 (TSQRRLNVTR) lie on the Cytoplasmic side of the membrane. Residues 562 to 584 (FLMCNLAFADFILGLYIFILTSV) traverse the membrane as a helical segment. The Extracellular portion of the chain corresponds to 585 to 606 (SAVTRGDYHNYVQQWQNGAGCK). A helical transmembrane segment spans residues 607 to 628 (ILGFLAVFSSELSLFTLVMMTI). At 629–651 (ERFYAIVHAMHMNARLSFRKTVR) the chain is on the cytoplasmic side. A helical transmembrane segment spans residues 652–673 (FMIGGWIFALVMAVVPLTGVSG). The Extracellular segment spans residues 674–691 (YSKVAICLPFDVSDATST). Residues 692–712 (AYVAFLLLVNGASFISVMYLY) form a helical membrane-spanning segment. The Cytoplasmic segment spans residues 713–739 (SRMLYVVVSGGDMEGAPKRNDSKVAKR). The chain crosses the membrane as a helical span at residues 740–763 (MAILVFTDMLCWAPIAFFGLLAAF). Residues 764 to 774 (GQTLLTVTQSK) are Extracellular-facing. Residues 775–795 (ILLVFFFPINSICNPFLYAFF) traverse the membrane as a helical segment. Residues 796–925 (TKAFKRELFT…QKQKILQSPS (130 aa)) lie on the Cytoplasmic side of the membrane. The segment at 904 to 925 (VTKSSSPPHLKLQKQKILQSPS) is disordered.

The protein belongs to the G-protein coupled receptor 1 family. FSH/LSH/TSH subfamily.

The protein localises to the cell membrane. Its function is as follows. Probable receptor for a glycoprotein hormone. The protein is Probable glycoprotein hormone G-protein coupled receptor of Anthopleura elegantissima (Green aggregating anemone).